A 265-amino-acid chain; its full sequence is Glutamate racemase (265 aa).

Residues 12–13 and 44–45 each bind substrate; these read DS and YG. The active-site Proton donor/acceptor is Cys-75. 76-77 contacts substrate; sequence NT. Cys-183 serves as the catalytic Proton donor/acceptor. A substrate-binding site is contributed by 184–185; sequence TH.

This sequence belongs to the aspartate/glutamate racemases family.

The enzyme catalyses L-glutamate = D-glutamate. Its pathway is cell wall biogenesis; peptidoglycan biosynthesis. Provides the (R)-glutamate required for cell wall biosynthesis. The chain is Glutamate racemase from Carboxydothermus hydrogenoformans (strain ATCC BAA-161 / DSM 6008 / Z-2901).